Reading from the N-terminus, the 279-residue chain is ATP synthase gamma chain (279 aa).

Belongs to the ATPase gamma chain family. In terms of assembly, F-type ATPases have 2 components, CF(1) - the catalytic core - and CF(0) - the membrane proton channel. CF(1) has five subunits: alpha(3), beta(3), gamma(1), delta(1), epsilon(1). CF(0) has three main subunits: a, b and c.

It is found in the cell membrane. Functionally, produces ATP from ADP in the presence of a proton gradient across the membrane. The gamma chain is believed to be important in regulating ATPase activity and the flow of protons through the CF(0) complex. This chain is ATP synthase gamma chain, found in Mycoplasma genitalium (strain ATCC 33530 / DSM 19775 / NCTC 10195 / G37) (Mycoplasmoides genitalium).